The following is a 412-amino-acid chain: Multifunctional CCA protein (412 aa).

ATP is bound by residues Gly8 and Arg11. Residues Gly8 and Arg11 each contribute to the CTP site. Positions 21 and 23 each coordinate Mg(2+). Residues Arg92, Arg138, and Arg141 each contribute to the ATP site. Residues Arg92, Arg138, and Arg141 each contribute to the CTP site. The 102-residue stretch at 227 to 328 (TGIHTMMTVA…IKLFYAIDVW (102 aa)) folds into the HD domain.

Belongs to the tRNA nucleotidyltransferase/poly(A) polymerase family. Bacterial CCA-adding enzyme type 1 subfamily. Monomer. Can also form homodimers and oligomers. Requires Mg(2+) as cofactor. Ni(2+) serves as cofactor.

It carries out the reaction a tRNA precursor + 2 CTP + ATP = a tRNA with a 3' CCA end + 3 diphosphate. The catalysed reaction is a tRNA with a 3' CCA end + 2 CTP + ATP = a tRNA with a 3' CCACCA end + 3 diphosphate. Its function is as follows. Catalyzes the addition and repair of the essential 3'-terminal CCA sequence in tRNAs without using a nucleic acid template. Adds these three nucleotides in the order of C, C, and A to the tRNA nucleotide-73, using CTP and ATP as substrates and producing inorganic pyrophosphate. tRNA 3'-terminal CCA addition is required both for tRNA processing and repair. Also involved in tRNA surveillance by mediating tandem CCA addition to generate a CCACCA at the 3' terminus of unstable tRNAs. While stable tRNAs receive only 3'-terminal CCA, unstable tRNAs are marked with CCACCA and rapidly degraded. The sequence is that of Multifunctional CCA protein from Baumannia cicadellinicola subsp. Homalodisca coagulata.